A 458-amino-acid polypeptide reads, in one-letter code: Adenylosuccinate synthetase (458 aa).

Residues 11 to 17 (GDEGKGG) and 39 to 41 (GHT) contribute to the GTP site. Asp-12 (proton acceptor) is an active-site residue. Residues Asp-12 and Gly-39 each contribute to the Mg(2+) site. Residues 12-15 (DEGK), 37-40 (NAGH), Thr-127, Arg-141, Gln-232, Thr-247, and Arg-330 each bind IMP. His-40 (proton donor) is an active-site residue. Substrate is bound at residue 326–332 (TVTGRPR). Residues Arg-332, 358-360 (HLD), and 443-445 (GVG) contribute to the GTP site.

It belongs to the adenylosuccinate synthetase family. Homodimer. It depends on Mg(2+) as a cofactor.

It localises to the cytoplasm. It carries out the reaction IMP + L-aspartate + GTP = N(6)-(1,2-dicarboxyethyl)-AMP + GDP + phosphate + 2 H(+). It functions in the pathway purine metabolism; AMP biosynthesis via de novo pathway; AMP from IMP: step 1/2. Plays an important role in the de novo pathway of purine nucleotide biosynthesis. Catalyzes the first committed step in the biosynthesis of AMP from IMP. The protein is Adenylosuccinate synthetase of Haloarcula marismortui (strain ATCC 43049 / DSM 3752 / JCM 8966 / VKM B-1809) (Halobacterium marismortui).